Consider the following 259-residue polypeptide: Phosphoadenosine 5'-phosphosulfate reductase (259 aa).

The active-site Nucleophile; cysteine thiosulfonate intermediate is the C244.

Belongs to the PAPS reductase family. CysH subfamily.

The protein resides in the cytoplasm. It catalyses the reaction [thioredoxin]-disulfide + sulfite + adenosine 3',5'-bisphosphate + 2 H(+) = [thioredoxin]-dithiol + 3'-phosphoadenylyl sulfate. It functions in the pathway sulfur metabolism; hydrogen sulfide biosynthesis; sulfite from sulfate: step 3/3. Catalyzes the formation of sulfite from phosphoadenosine 5'-phosphosulfate (PAPS) using thioredoxin as an electron donor. This is Phosphoadenosine 5'-phosphosulfate reductase from Vibrio campbellii (strain ATCC BAA-1116).